The sequence spans 407 residues: Na(+)-translocating NADH-quinone reductase subunit F (407 aa).

Residues 3 to 23 (IILGVVMFTLIVLALVLVILF) traverse the membrane as a helical segment. A 2Fe-2S ferredoxin-type domain is found at 32 to 126 (GDITISINGD…DMDIELPEEI (95 aa)). [2Fe-2S] cluster-binding residues include cysteine 69, cysteine 75, cysteine 78, and cysteine 110. An FAD-binding FR-type domain is found at 129 to 269 (VKKWECTVIS…SGPFGEFFAK (141 aa)). The segment at 272-389 (DAEMVFIGGG…PMMNAAVIGM (118 aa)) is catalytic.

This sequence belongs to the NqrF family. As to quaternary structure, composed of six subunits; NqrA, NqrB, NqrC, NqrD, NqrE and NqrF. [2Fe-2S] cluster is required as a cofactor. The cofactor is FAD.

It localises to the cell inner membrane. The enzyme catalyses a ubiquinone + n Na(+)(in) + NADH + H(+) = a ubiquinol + n Na(+)(out) + NAD(+). Functionally, NQR complex catalyzes the reduction of ubiquinone-1 to ubiquinol by two successive reactions, coupled with the transport of Na(+) ions from the cytoplasm to the periplasm. The first step is catalyzed by NqrF, which accepts electrons from NADH and reduces ubiquinone-1 to ubisemiquinone by a one-electron transfer pathway. The sequence is that of Na(+)-translocating NADH-quinone reductase subunit F from Vibrio vulnificus (strain CMCP6).